The sequence spans 1160 residues: AF4/FMR2 family member 4 (1160 aa).

Residues 1–19 (MNREDRNVLRMKERERRNQ) are compositionally biased toward basic and acidic residues. Disordered stretches follow at residues 1–42 (MNRE…YKVT), 78–289 (PKPA…SKAH), 322–908 (WPPP…FDDR), and 1031–1070 (NSYSNSQAPSPGLGSKAVGMPSPVSPKLSPGNSGSYSSGG). Polar residues predominate over residues 115–128 (PSTSQSQKRSSALQ). Ser-120 is subject to Phosphoserine. Residues 172–189 (RSSSPGKPQAVSSLSSSH) are compositionally biased toward low complexity. Over residues 193-212 (HGNDHHSKEHQRSKSPRDPD) the composition is skewed to basic and acidic residues. Ser-207 carries the phosphoserine modification. Low complexity predominate over residues 229–247 (SSQSFPPSLMSKSSSMLQK). Polar residues-rich tracts occupy residues 268–280 (EHYSSQSHGNSMT) and 360–370 (YSTAKTSNGHQ). 4 positions are modified to phosphoserine: Ser-382, Ser-383, Ser-384, and Ser-387. Polar residues predominate over residues 398–407 (PRSTPGSNSE). Basic and acidic residues predominate over residues 408-424 (PSHHNSEGADNSRDDSS). Low complexity predominate over residues 425–457 (SHSGSESSSGSDSESESSSSDSEANEPSQSASP). A phosphoserine mark is found at Ser-482, Ser-485, and Ser-486. 3 stretches are compositionally biased toward polar residues: residues 483–496 (PASSVDSNIPSSQA), 505–523 (GTASNYTDPGGTKETSSAT), and 544–555 (SPAQSDSTTQRR). Phosphoserine is present on Ser-544. Residues 563 to 581 (KKPEKSAAEEPRGGLKIES) are compositionally biased toward basic and acidic residues. Residue Lys-578 forms a Glycyl lysine isopeptide (Lys-Gly) (interchain with G-Cter in SUMO2) linkage. The span at 594–607 (SRHKAATKGSRKPN) shows a compositional bias: basic residues. Basic and acidic residues predominate over residues 608 to 622 (IKKESKSSPRPTAEK). Residues 641 to 657 (TDTSSSDSDGSESLPPS) show a composition bias toward low complexity. The residue at position 666 (Ser-666) is a Phosphoserine. Thr-669 is modified (phosphothreonine). Ser-675, Ser-689, Ser-698, and Ser-701 each carry phosphoserine. At Tyr-707 the chain carries Phosphotyrosine. 3 stretches are compositionally biased toward basic and acidic residues: residues 725–756 (PYKETEPPKGEKKNVPEKHSREVQKQASEKAS), 764–784 (KNDDDTRASESKKPKTEDKNS), and 794–806 (ESSKQSSTKEKDL). Ser-809 bears the Phosphoserine mark. Position 817 is an N6-acetyllysine (Lys-817). Residue Ser-831 is modified to Phosphoserine. Composition is skewed to low complexity over residues 831–859 (SQSSSLKSSGTSSKENSGSSSKSSSSSTA) and 880–895 (PNSSSNCPPSTPTSES). A phosphoserine mark is found at Ser-1040, Ser-1052, Ser-1055, and Ser-1059. Residues 1059–1070 (SPGNSGSYSSGG) are compositionally biased toward low complexity.

The protein belongs to the AF4 family. As to quaternary structure, component of the super elongation complex (SEC), at least composed of EAF1, EAF2, CDK9, MLLT3/AF9, AFF (AFF1 or AFF4), the P-TEFb complex and ELL (ELL, ELL2 or ELL3). Interacts with ELL2; the interaction is direct and leads to stabilize ELL2 and prevent ELL2 ubiquitination and degradation. Interacts with ELL3; the interaction is direct. Dephosphorylated at Ser-544 by the PNUTS-PP1 complex, promoting RNA polymerase II transcription pause-release. As to expression, highly expressed in testis by Sertoli cells, and at low levels in other tissues.

It localises to the nucleus. It is found in the chromosome. Key component of the super elongation complex (SEC), a complex required to increase the catalytic rate of RNA polymerase II transcription by suppressing transient pausing by the polymerase at multiple sites along the DNA. In the SEC complex, AFF4 acts as a central scaffold that recruits other factors through direct interactions with ELL proteins (ELL, ELL2 or ELL3) and the P-TEFb complex. The sequence is that of AF4/FMR2 family member 4 (Aff4) from Mus musculus (Mouse).